A 362-amino-acid chain; its full sequence is Histidinol-phosphate aminotransferase (362 aa).

Lys218 is subject to N6-(pyridoxal phosphate)lysine.

The protein belongs to the class-II pyridoxal-phosphate-dependent aminotransferase family. Histidinol-phosphate aminotransferase subfamily. Homodimer. Pyridoxal 5'-phosphate serves as cofactor.

The enzyme catalyses L-histidinol phosphate + 2-oxoglutarate = 3-(imidazol-4-yl)-2-oxopropyl phosphate + L-glutamate. It participates in amino-acid biosynthesis; L-histidine biosynthesis; L-histidine from 5-phospho-alpha-D-ribose 1-diphosphate: step 7/9. In Xanthomonas campestris pv. campestris (strain 8004), this protein is Histidinol-phosphate aminotransferase.